The chain runs to 770 residues: tRNA(Met) cytidine acetyltransferase TmcA 2 (770 aa).

Residues Q209 and R390 each coordinate ATP. One can recognise an N-acetyltransferase domain in the interval 458–608 (MIMLDGIHHK…YPVVVIRPIS (151 aa)). 533-535 (IAV) contacts acetyl-CoA.

The protein belongs to the TmcA family.

The protein localises to the cytoplasm. The enzyme catalyses cytidine(34) in elongator tRNA(Met) + acetyl-CoA + ATP + H2O = N(4)-acetylcytidine(34) in elongator tRNA(Met) + ADP + phosphate + CoA + H(+). It catalyses the reaction a cytidine in RNA + acetyl-CoA + ATP + H2O = an N(4)-acetylcytidine in RNA + ADP + phosphate + CoA + H(+). The catalysed reaction is a cytidine in tRNA + acetyl-CoA + ATP + H2O = an N(4)-acetylcytidine in tRNA + ADP + phosphate + CoA + H(+). It carries out the reaction a cytidine in mRNA + acetyl-CoA + ATP + H2O = an N(4)-acetylcytidine in mRNA + ADP + phosphate + CoA + H(+). Its function is as follows. Catalyzes the formation of N(4)-acetylcytidine (ac(4)C) at the wobble position of tRNA(Met), by using acetyl-CoA as an acetyl donor and ATP (or GTP). Functionally, catalyzes the formation of 41 N(4)-acetylcytidine (ac(4)C) sites in RNA, almost always on the middle C of a CCG motif. Modifications are found mostly in tRNA, with small amounts found in rRNA and mRNA. The sequence is that of tRNA(Met) cytidine acetyltransferase TmcA 2 from Saccharolobus solfataricus (strain ATCC 35092 / DSM 1617 / JCM 11322 / P2) (Sulfolobus solfataricus).